Consider the following 272-residue polypeptide: Probable prolyl 4-hydroxylase 11 (272 aa).

Residues 1–55 lie on the Cytoplasmic side of the membrane; it reads MSKSTSVSTILYLRQRLQGLKIYETSDLIQHINTFDELVGEQVSVDVKIEEKTKD. A helical; Signal-anchor for type II membrane protein membrane pass occupies residues 56–80; the sequence is MILLCSLSPLLTTLTCSMVKVAASL. Over 81–272 the chain is Lumenal; it reads RFPNERWLEV…KRHCLSLNLF (192 aa). One can recognise a Fe2OG dioxygenase domain in the interval 179-272; it reads NGETLQVINY…KRHCLSLNLF (94 aa). Residues His197, Asp199, and His261 each coordinate Fe cation.

It belongs to the P4HA family. The cofactor is Fe(2+). It depends on L-ascorbate as a cofactor.

It is found in the endoplasmic reticulum membrane. The catalysed reaction is L-prolyl-[collagen] + 2-oxoglutarate + O2 = trans-4-hydroxy-L-prolyl-[collagen] + succinate + CO2. Its function is as follows. Catalyzes the post-translational formation of 4-hydroxyproline in -Xaa-Pro-Gly- sequences in proline-rich peptide sequences of plant glycoproteins and other proteins. Hydroxyprolines are important constituent of many plant cell wall glycoproteins such as extensins, hydroxyproline-rich glycoproteins, lectins and arabinogalactan proteins. The chain is Probable prolyl 4-hydroxylase 11 from Arabidopsis thaliana (Mouse-ear cress).